Here is a 376-residue protein sequence, read N- to C-terminus: Chlorophyll synthase, chloroplastic (376 aa).

A chloroplast-targeting transit peptide spans 1-47 (MATSHLLAAASSTAASSATFRPPLLSLRSPPPSSLRLNRRRHFQVVR). Residues 48–69 (AAETDKETKANAPEKAPAGGSS) form a disordered region. 8 helical membrane-spanning segments follow: residues 95 to 115 (PVTWPPLVWGVLCGAAASGNF), 171 to 191 (VITQIWALLLAGLGLGALLDV), 197 to 217 (FPIIFYLAVGGSLLSYIYSAP), 230 to 250 (FALGASYIGLPWWAGQALFGT), 255 to 275 (IVVLTSLYSIAGLGIAIVNDF), 300 to 320 (WICVGAIDITQLSVAGYLFSS), 325 to 345 (YALALLGLTIPQVVFQFQYFL), and 355 to 375 (YQASAQPFFVLGLLVTALATS).

The protein belongs to the UbiA prenyltransferase family. Chlorophyll synthase subfamily.

It localises to the plastid. Its subcellular location is the chloroplast membrane. The enzyme catalyses phytyl diphosphate + chlorophyllide a + H(+) = chlorophyll a + diphosphate. In terms of biological role, involved in one of the last steps of the biosynthesis of chlorophyll a. The sequence is that of Chlorophyll synthase, chloroplastic (CHLG) from Oryza sativa subsp. japonica (Rice).